The following is a 537-amino-acid chain: MSVVLLSSTSATITKSQSKKIPFLSPTTKFPLKVSISPSRSKLFHNPLRVAAPPSVPTSDSTEEKRIEEEYGGDKEEEGSEFKWRDHWYPVSLVEDLDPNVPTPFQLLGRDLVLWFDRNDQKWAAFDDLCPHRLAPLSEGRLDENGHLQCSYHGWSFGGCGSCTRIPQAATSGPEARAVKSPRACAIKFPTMVSQGLLFVWPDENGWDRANSIEPPRLPDDFDKPEFSTVTIQRDLFYGYDTLMENVSDPSHIDFAHHKVTGRRDRAKPLPFKVESSGPWGFQGANDDSPRITAKFVAPCYSMNKIELDAKLPIVGNQKWVIWICSFNIPMAPGKTRSIVCSARNFFQFSVPGPAWWQVVPRWYEHWTSNLVYDGDMIVLQGQEKVFLAKSMESPDYDVNKQYTKLTFTPTQADRFVLAFRNWLRRHGKSQPEWFGSTPSNQPLPSTVLTKRQMLDRFDQHTQVCSSCKGAYNSFQILKKFLVGATVFWAATAGVPSDVQIRLVLAGLSLISAASAYALHEQEKNFVFRDYVHSEIE.

The transit peptide at 1 to 49 (MSVVLLSSTSATITKSQSKKIPFLSPTTKFPLKVSISPSRSKLFHNPLR) directs the protein to the chloroplast. Residues 51–77 (AAPPSVPTSDSTEEKRIEEEYGGDKEE) form a disordered region. The segment covering 62–77 (TEEKRIEEEYGGDKEE) has biased composition (basic and acidic residues). Positions 88–200 (WYPVSLVEDL…TMVSQGLLFV (113 aa)) constitute a Rieske domain. [2Fe-2S] cluster is bound by residues Cys130, His132, Cys150, and His153.

Interacts with HCAR, SGR1, RCCR, PPH and the LHCII complex. Part of a SGR1-CCE-LHCII complex, which acts in chlorophyll breakdown.

The protein resides in the plastid. Its subcellular location is the chloroplast thylakoid membrane. The enzyme catalyses pheophorbide a + 2 reduced [2Fe-2S]-[ferredoxin] + O2 + 2 H(+) = red chlorophyll catabolite + 2 oxidized [2Fe-2S]-[ferredoxin]. It participates in porphyrin-containing compound metabolism; chlorophyll degradation. Might be regulated by a phosphorylation/dephosphorylation mechanism. In terms of biological role, catalyzes the key reaction of chlorophyll catabolism, porphyrin macrocycle cleavage of pheophorbide a (pheide a) to a primary fluorescent catabolite (pFCC). Works in a two-step reaction with red chlorophyll catabolite reductase (RCCR). Creates the intermediate RCC through the opening of the porphyrin macrocycle by the introduction of one atom of molecular oxygen at the alpha-methine bridge. Seems to be specific for pheide a. Belongs to the chlorophyll catabolic enzymes (CCEs). The protein is Pheophorbide a oxygenase, chloroplastic (PAO) of Arabidopsis thaliana (Mouse-ear cress).